The sequence spans 397 residues: Tryptophan synthase beta chain (397 aa).

K87 carries the post-translational modification N6-(pyridoxal phosphate)lysine.

Belongs to the TrpB family. As to quaternary structure, tetramer of two alpha and two beta chains. It depends on pyridoxal 5'-phosphate as a cofactor.

It catalyses the reaction (1S,2R)-1-C-(indol-3-yl)glycerol 3-phosphate + L-serine = D-glyceraldehyde 3-phosphate + L-tryptophan + H2O. The protein operates within amino-acid biosynthesis; L-tryptophan biosynthesis; L-tryptophan from chorismate: step 5/5. Functionally, the beta subunit is responsible for the synthesis of L-tryptophan from indole and L-serine. In Escherichia fergusonii (strain ATCC 35469 / DSM 13698 / CCUG 18766 / IAM 14443 / JCM 21226 / LMG 7866 / NBRC 102419 / NCTC 12128 / CDC 0568-73), this protein is Tryptophan synthase beta chain.